The sequence spans 365 residues: Patr class I histocompatibility antigen, A-2 alpha chain (365 aa).

An N-terminal signal peptide occupies residues 1–24 (MAVMPPRTLLLLLSGALALTQTWA). Positions 25–114 (GSHSMRYFFT…LRGYYNQSED (90 aa)) are alpha-1. Residues 25–308 (GSHSMRYFFT…EPSSQPTIPI (284 aa)) lie on the Extracellular side of the membrane. N-linked (GlcNAc...) asparagine glycosylation is present at N110. Residues 115 to 206 (GSHTIQIMYG…ENGKETLQRT (92 aa)) form an alpha-2 region. 2 cysteine pairs are disulfide-bonded: C125–C188 and C227–C283. Positions 207–298 (DPPKTHMTHH…GLPKPLTLRW (92 aa)) are alpha-3. The region spanning 209–295 (PKTHMTHHPI…QHEGLPKPLT (87 aa)) is the Ig-like C1-type domain. Residues 299–308 (EPSSQPTIPI) are connecting peptide. A helical transmembrane segment spans residues 309–332 (VGIIAGLVLLGAVITGAVVAAVMW). Residues 333–365 (RRKSSDRKGGSYTQAASSDSAQGSDVSLTACKV) are Cytoplasmic-facing. The tract at residues 339 to 360 (RKGGSYTQAASSDSAQGSDVSL) is disordered. The residue at position 343 (S343) is a Phosphoserine. Residue Y344 is modified to Phosphotyrosine. The span at 346–359 (QAASSDSAQGSDVS) shows a compositional bias: low complexity. A phosphoserine mark is found at S349, S350, S352, S356, and S359.

Belongs to the MHC class I family. In terms of assembly, heterodimer of an alpha chain and a beta chain (beta-2-microglobulin).

The protein localises to the membrane. In terms of biological role, involved in the presentation of foreign antigens to the immune system. The sequence is that of Patr class I histocompatibility antigen, A-2 alpha chain from Pan troglodytes (Chimpanzee).